Consider the following 194-residue polypeptide: Potassium-transporting ATPase KdpC subunit (194 aa).

The chain crosses the membrane as a helical span at residues 12–34 (LFLLLLTGGVYPLLTTALGQWWF).

It belongs to the KdpC family. As to quaternary structure, the system is composed of three essential subunits: KdpA, KdpB and KdpC.

It localises to the cell inner membrane. Part of the high-affinity ATP-driven potassium transport (or Kdp) system, which catalyzes the hydrolysis of ATP coupled with the electrogenic transport of potassium into the cytoplasm. This subunit acts as a catalytic chaperone that increases the ATP-binding affinity of the ATP-hydrolyzing subunit KdpB by the formation of a transient KdpB/KdpC/ATP ternary complex. The polypeptide is Potassium-transporting ATPase KdpC subunit (Salmonella choleraesuis (strain SC-B67)).